We begin with the raw amino-acid sequence, 199 residues long: Recombination protein RecR (199 aa).

The C4-type zinc finger occupies 58–73; sequence CKKCFNLTSEEECDIC. In terms of domain architecture, Toprim spans 81 to 175; it reads NIICVVAETK…KVTRIAYGLP (95 aa).

The protein belongs to the RecR family.

In terms of biological role, may play a role in DNA repair. It seems to be involved in an RecBC-independent recombinational process of DNA repair. It may act with RecF and RecO. The polypeptide is Recombination protein RecR (Prochlorococcus marinus (strain MIT 9515)).